We begin with the raw amino-acid sequence, 766 residues long: LPS-assembly protein LptD (766 aa).

The first 18 residues, 1-18, serve as a signal peptide directing secretion; that stretch reads MQIRYFLALSLLPNIVLA.

Belongs to the LptD family. Component of the lipopolysaccharide transport and assembly complex. Interacts with LptE and LptA.

Its subcellular location is the cell outer membrane. Functionally, together with LptE, is involved in the assembly of lipopolysaccharide (LPS) at the surface of the outer membrane. The protein is LPS-assembly protein LptD of Shewanella frigidimarina (strain NCIMB 400).